We begin with the raw amino-acid sequence, 606 residues long: Proline--tRNA ligase (606 aa).

Belongs to the class-II aminoacyl-tRNA synthetase family. ProS type 1 subfamily. As to quaternary structure, homodimer.

The protein resides in the cytoplasm. The catalysed reaction is tRNA(Pro) + L-proline + ATP = L-prolyl-tRNA(Pro) + AMP + diphosphate. In terms of biological role, catalyzes the attachment of proline to tRNA(Pro) in a two-step reaction: proline is first activated by ATP to form Pro-AMP and then transferred to the acceptor end of tRNA(Pro). As ProRS can inadvertently accommodate and process non-cognate amino acids such as alanine and cysteine, to avoid such errors it has two additional distinct editing activities against alanine. One activity is designated as 'pretransfer' editing and involves the tRNA(Pro)-independent hydrolysis of activated Ala-AMP. The other activity is designated 'posttransfer' editing and involves deacylation of mischarged Ala-tRNA(Pro). The misacylated Cys-tRNA(Pro) is not edited by ProRS. The polypeptide is Proline--tRNA ligase (Kocuria rhizophila (strain ATCC 9341 / DSM 348 / NBRC 103217 / DC2201)).